The following is a 149-amino-acid chain: CCAAT/enhancer-binding protein gamma (149 aa).

Positions 1-12 are enriched in polar residues; the sequence is MSKVSQQNSTPG. The disordered stretch occupies residues 1–92; that stretch reads MSKVSQQNST…SKQKAQDTLQ (92 aa). A Glycyl lysine isopeptide (Lys-Gly) (interchain with G-Cter in SUMO2) cross-link involves residue Lys3. Residues 28-37 are compositionally biased toward low complexity; that stretch reads LQQVPQLVPA. The segment covering 56 to 72 has biased composition (basic and acidic residues); it reads SPMDRNSDEYRQRRERN. One can recognise a bZIP domain in the interval 62–125; the sequence is SDEYRQRRER…SVLKDLFLEH (64 aa). Residues 66 to 93 are basic motif; it reads RQRRERNNMAVKKSRLKSKQKAQDTLQR. A leucine-zipper region spans residues 97-118; sequence LKEENERLEAKIKLLTKELSVL. The interval 128–149 is disordered; it reads NLADNVQPSSTENTTNPDKAGQ. Over residues 131–149 the composition is skewed to polar residues; sequence DNVQPSSTENTTNPDKAGQ.

This sequence belongs to the bZIP family. C/EBP subfamily. In terms of assembly, binds DNA as a dimer and can form stable heterodimers with CEBPA and CEBPB. Interacts with ZNF638; this interaction increases transcriptional activation.

It is found in the nucleus. Functionally, transcription factor that binds to the promoter and the enhancer regions of target genes. Binds to the enhancer element PRE-I (positive regulatory element-I) of the IL-4 gene. Binds to the promoter and the enhancer of the immunoglobulin heavy chain. Binds to GPE1, a cis-acting element in the G-CSF gene promoter. The sequence is that of CCAAT/enhancer-binding protein gamma (CEBPG) from Bos taurus (Bovine).